Reading from the N-terminus, the 320-residue chain is tRNA-cytidine(32) 2-sulfurtransferase (320 aa).

The PP-loop motif signature appears at 54-59; the sequence is SGGKDS. The [4Fe-4S] cluster site is built by Cys-129, Cys-132, and Cys-220.

This sequence belongs to the TtcA family. As to quaternary structure, homodimer. Requires Mg(2+) as cofactor. [4Fe-4S] cluster serves as cofactor.

The protein resides in the cytoplasm. It carries out the reaction cytidine(32) in tRNA + S-sulfanyl-L-cysteinyl-[cysteine desulfurase] + AH2 + ATP = 2-thiocytidine(32) in tRNA + L-cysteinyl-[cysteine desulfurase] + A + AMP + diphosphate + H(+). It participates in tRNA modification. In terms of biological role, catalyzes the ATP-dependent 2-thiolation of cytidine in position 32 of tRNA, to form 2-thiocytidine (s(2)C32). The sulfur atoms are provided by the cysteine/cysteine desulfurase (IscS) system. The protein is tRNA-cytidine(32) 2-sulfurtransferase of Bordetella parapertussis (strain 12822 / ATCC BAA-587 / NCTC 13253).